A 1254-amino-acid polypeptide reads, in one-letter code: Receptor tyrosine-protein kinase erbB-2 (1254 aa).

Positions 1–22 (MELAAWCGWGLLLALLSPGASG) are cleaved as a signal peptide. Residues 23–652 (TQVCTGTDMK…PAEQRASPAT (630 aa)) lie on the Extracellular side of the membrane. A disulfide bridge links Cys26 with Cys53. Residues Asn68, Asn125, and Asn187 are each glycosylated (N-linked (GlcNAc...) asparagine). 14 cysteine pairs are disulfide-bonded: Cys162–Cys192, Cys195–Cys204, Cys199–Cys212, Cys236–Cys244, Cys240–Cys252, Cys255–Cys264, Cys268–Cys295, Cys299–Cys311, Cys315–Cys331, Cys334–Cys338, Cys342–Cys367, Cys475–Cys504, Cys511–Cys520, and Cys515–Cys528. A glycan (N-linked (GlcNAc...) asparagine) is linked at Asn259. Asn530 carries N-linked (GlcNAc...) asparagine glycosylation. 8 disulfides stabilise this stretch: Cys531–Cys540, Cys544–Cys560, Cys563–Cys576, Cys567–Cys584, Cys587–Cys596, Cys600–Cys623, Cys626–Cys634, and Cys630–Cys642. N-linked (GlcNAc...) asparagine glycosylation occurs at Asn571. Asn629 carries an N-linked (GlcNAc...) asparagine glycan. A helical membrane pass occupies residues 653-675 (SIIATVVGILLFLVIGVVVGILI). The interval 676–689 (KRRRQKIRKYTMRR) is required for interaction with KPNB1 and EEA1. The Nuclear localization signal motif lies at 676-689 (KRRRQKIRKYTMRR). At 676–1254 (KRRRQKIRKY…PEYLGLDVPV (579 aa)) the chain is on the cytoplasmic side. The Protein kinase domain maps to 720-987 (LRKVKVLGSG…RMARDPQRFV (268 aa)). ATP contacts are provided by residues 726 to 734 (LGSGAFGTV) and Lys753. The active-site Proton acceptor is the Asp845. Phosphotyrosine is present on Tyr877. 2 disordered regions span residues 1029–1116 (GFFF…SEDP) and 1133–1179 (CSPQ…GKNG). Phosphoserine occurs at positions 1054, 1078, 1083, and 1107. Tyr1112 bears the Phosphotyrosine mark. The residue at position 1139 (Tyr1139) is a Phosphotyrosine; by autocatalysis. Residues 1146-1161 (RPQPPLTPEGPLPPVR) are compositionally biased toward pro residues. At Thr1166 the chain carries Phosphothreonine. An interaction with PIK3C2B region spans residues 1195-1197 (EYL). Position 1196 is a phosphotyrosine (Tyr1196). The disordered stretch occupies residues 1223–1254 (DQDPSERGSPPNTFEGTPTAENPEYLGLDVPV). The span at 1232-1242 (PPNTFEGTPTA) shows a compositional bias: polar residues. Tyr1247 carries the post-translational modification Phosphotyrosine; by autocatalysis.

The protein belongs to the protein kinase superfamily. Tyr protein kinase family. EGF receptor subfamily. Homodimer. Heterodimer with EGFR, ERBB3 and ERBB4. Part of a complex with EGFR and either PIK3C2A or PIK3C2B. May interact with PIK3C2B when phosphorylated on Tyr-1196. Interacts with PRKCABP and PLXNB1. Interacts (when phosphorylated on Tyr-1247) with MEMO. Interacts with MUC1. Interacts (when phosphorylated on Tyr-1139) with GRB7 (via SH2 domain). Interacts (when phosphorylated on Tyr-1247) with ERBIN. Interacts with SRC, KPNB1, RANBP2, EEA1, CRM1, CLTC, PTK6, RPA194, MYOC and ACTB. Interacts (preferentially with the tyrosine phosphorylated form) with CPNE3; this interaction occurs at the cell membrane and is increased in a growth factor heregulin-dependent manner. Interacts with HSP90AA1 and HSP90AB1 in an ATP-dependent manner; the interaction suppresses ERBB2 kinase activity. Interacts with SORL1; this interaction regulates ERBB2 subcellular distribution by promoting its recycling after internalization from endosomes back to the plasma membrane, hence stimulates ERBB2-mediated signaling. Interacts with SH3BGRL. Interacts with ROR1. In terms of processing, autophosphorylated. Autophosphorylation occurs in trans, i.e. one subunit of the dimeric receptor phosphorylates tyrosine residues on the other subunit. Ligand-binding increases phosphorylation on tyrosine residues. Signaling via SEMA4C promotes phosphorylation at Tyr-1247. Dephosphorylated by PTPN12.

It is found in the cell membrane. Its subcellular location is the cell projection. The protein localises to the ruffle membrane. The protein resides in the early endosome. It localises to the cytoplasm. It is found in the perinuclear region. Its subcellular location is the nucleus. The enzyme catalyses L-tyrosyl-[protein] + ATP = O-phospho-L-tyrosyl-[protein] + ADP + H(+). Its function is as follows. Protein tyrosine kinase that is part of several cell surface receptor complexes, but that apparently needs a coreceptor for ligand binding. Essential component of a neuregulin-receptor complex, although neuregulins do not interact with it alone. GP30 is a potential ligand for this receptor. Regulates outgrowth and stabilization of peripheral microtubules (MTs). Upon ERBB2 activation, the MEMO1-RHOA-DIAPH1 signaling pathway elicits the phosphorylation and thus the inhibition of GSK3B at cell membrane. This prevents the phosphorylation of APC and CLASP2, allowing its association with the cell membrane. In turn, membrane-bound APC allows the localization of MACF1 to the cell membrane, which is required for microtubule capture and stabilization. In terms of biological role, in the nucleus is involved in transcriptional regulation. Associates with the 5'-TCAAATTC-3' sequence in the PTGS2/COX-2 promoter and activates its transcription. Implicated in transcriptional activation of CDKN1A; the function involves STAT3 and SRC. Involved in the transcription of rRNA genes by RNA Pol I and enhances protein synthesis and cell growth. This is Receptor tyrosine-protein kinase erbB-2 (ERBB2) from Mesocricetus auratus (Golden hamster).